Here is a 54-residue protein sequence, read N- to C-terminus: Conotoxin vc5c (54 aa).

The signal sequence occupies residues 1 to 14; that stretch reads VILLLLIASIPSDA. The propeptide occupies 15-43; sequence VQLKTKDDMPLASFHGNARRTLQMLSNKR. Residue Glu50 is modified to 4-carboxyglutamate. At Trp51 the chain carries 6'-bromotryptophan.

This sequence belongs to the conotoxin T superfamily. Contains 2 disulfide bonds that can be either 'C1-C3, C2-C4' or 'C1-C4, C2-C3', since these disulfide connectivities have been observed for conotoxins with cysteine framework V (for examples, see AC P0DQQ7 and AC P81755). In terms of tissue distribution, expressed by the venom duct.

It is found in the secreted. This Conus victoriae (Queen Victoria cone) protein is Conotoxin vc5c.